We begin with the raw amino-acid sequence, 89 residues long: Protein S100-A6 (89 aa).

EF-hand domains lie at 12 to 47 (LVAI…IGSK) and 48 to 83 (LQDA…LALI). T28 and E33 together coordinate Ca(2+). K40 is modified (N6-acetyllysine). S46 bears the Phosphoserine mark. K47 is subject to N6-acetyllysine; alternate. The residue at position 47 (K47) is an N6-succinyllysine; alternate. 5 residues coordinate Ca(2+): D61, N63, D65, E67, and E72.

This sequence belongs to the S-100 family. Homodimer; head to tail assembly of 2 subunits. Interacts with CACYBP in a calcium-dependent manner. Interacts with ANXA2 and ANXA11 (via N-terminus). Interacts with SUGT1. Interacts with TP53; has higher affinity for TP53 that is phosphorylated on its N-terminal domain, and lower affinity for TP53 that is phosphorylated on its C-terminal domain. Interacts with tropomyosin. Interacts with FKBP4. Interacts with PPP5C (via TPR repeats); the interaction is calcium-dependent and modulates PPP5C activity. Interacts with TPPP; this interaction inhibits TPPP dimerization.

It localises to the nucleus envelope. Its subcellular location is the cytoplasm. The protein resides in the cell membrane. In terms of biological role, may function as calcium sensor and modulator, contributing to cellular calcium signaling. May function by interacting with other proteins, such as TPR-containing proteins, and indirectly play a role in many physiological processes such as the reorganization of the actin cytoskeleton and in cell motility. Binds 2 calcium ions. Calcium binding is cooperative. This is Protein S100-A6 (S100a6) from Mus musculus (Mouse).